The following is a 78-amino-acid chain: RNA-binding protein Hfq (78 aa).

Positions 9 to 69 constitute a Sm domain; it reads DHFLNQLRKE…ISTFAPQRNV (61 aa).

This sequence belongs to the Hfq family. In terms of assembly, homohexamer.

RNA chaperone that binds small regulatory RNA (sRNAs) and mRNAs to facilitate mRNA translational regulation in response to envelope stress, environmental stress and changes in metabolite concentrations. Also binds with high specificity to tRNAs. The polypeptide is RNA-binding protein Hfq (Halalkalibacterium halodurans (strain ATCC BAA-125 / DSM 18197 / FERM 7344 / JCM 9153 / C-125) (Bacillus halodurans)).